A 539-amino-acid chain; its full sequence is MHNINHLLNTLTDYGIHNTGKIFYNPSYSILFQEETRDTLVGFERGTVTKLGAVAVDTGIFTGRSPKDKYIVRDDITRDTFWWADQGKNKSDNHPITQAIWNELKTCVTQQLSNKPLFVVDAFCGAHSNSRLQVRFITEVAWQAHFVKNMFIRPSEEELTRFHPDFVVMNGAKCTNPNWKEQGLHSKNFVAFNLTERIQLIGGTWYGGEMKKGLFSMMNYFLPLKRIAAMHCSANVGVKGDVAVFFGLSGTGKTTLSADPKRQLIGDDEHGWDDEGVFNFEGGCYAKTIELSESDEPDIYHAIKRDALLENVVVLPDATVDFNDSSKTQNTRVSYPIYHIQNIVQPVSKAGHAKKIIFLTADAFGVLPPVVHLTLEQTQYHFLSGFTSKLAGTELGITSPVPTFSACFGEAFLSLHPTQYAEVLLQRMQAAQAKAYLVNTGWNGMGHRISIKNTRAIIEAILHEKIDHVPTFNLPIFNLSVPTEIEGVNSEILDPRASYSEVKEWQHKAENLARRFIKNFEQYSDTAVGALLLKSGPEL.

Substrate is bound by residues Arg-64, Tyr-206, and Lys-212. Residues Lys-212, His-231, and 247–255 contribute to the ATP site; that span reads GLSGTGKTT. The Mn(2+) site is built by Lys-212 and His-231. Mn(2+) is bound at residue Asp-268. ATP is bound by residues Glu-296, Arg-332, 448–449, and Thr-454; that span reads RI. Arg-332 serves as a coordination point for substrate.

Belongs to the phosphoenolpyruvate carboxykinase (ATP) family. In terms of assembly, monomer. It depends on Mn(2+) as a cofactor.

Its subcellular location is the cytoplasm. It catalyses the reaction oxaloacetate + ATP = phosphoenolpyruvate + ADP + CO2. Its pathway is carbohydrate biosynthesis; gluconeogenesis. In terms of biological role, involved in the gluconeogenesis. Catalyzes the conversion of oxaloacetate (OAA) to phosphoenolpyruvate (PEP) through direct phosphoryl transfer between the nucleoside triphosphate and OAA. This is Phosphoenolpyruvate carboxykinase (ATP) from Hamiltonella defensa subsp. Acyrthosiphon pisum (strain 5AT).